Consider the following 367-residue polypeptide: Protein NDRG4-B (367 aa).

A compositionally biased stretch (basic and acidic residues) spans 1-12 (MSELRFPEEKPL). 2 disordered regions span residues 1–21 (MSEL…TEME) and 333–367 (LTSA…EVSC). Positions 347 to 367 (CTQSESSDGIGQINHTMEVSC) are enriched in polar residues.

Belongs to the NDRG family.

The protein localises to the cytoplasm. It localises to the cytosol. Functionally, contributes to the maintenance of intracerebral BDNF levels within the normal range. May enhance growth factor-induced ERK1 and ERK2 phosphorylation. May attenuate growth factor-promoted ELK1 phosphorylation in a microtubule-dependent manner. This chain is Protein NDRG4-B (ndrg4-b), found in Xenopus laevis (African clawed frog).